The chain runs to 335 residues: Succinylglutamate desuccinylase (335 aa).

Zn(2+) is bound by residues His59, Glu62, and His151. Glu215 is a catalytic residue.

It belongs to the AspA/AstE family. Succinylglutamate desuccinylase subfamily. Zn(2+) serves as cofactor.

The enzyme catalyses N-succinyl-L-glutamate + H2O = L-glutamate + succinate. It participates in amino-acid degradation; L-arginine degradation via AST pathway; L-glutamate and succinate from L-arginine: step 5/5. In terms of biological role, transforms N(2)-succinylglutamate into succinate and glutamate. The chain is Succinylglutamate desuccinylase from Pseudomonas syringae pv. tomato (strain ATCC BAA-871 / DC3000).